A 260-amino-acid chain; its full sequence is HTH-type transcriptional repressor NanR (260 aa).

A disordered region spans residues 1–21 (MSAFDHSSDDTQETIGNSLRR). One can recognise an HTH gntR-type domain in the interval 27–95 (KKLSEMVEEE…NGERARVSRP (69 aa)). The H-T-H motif DNA-binding region spans 55–74 (ERELMAFFNVGRPSVREALA).

The protein belongs to the NanR family.

Transcriptional repressor that controls expression of the genes required for the catabolism of sialic acids. The protein is HTH-type transcriptional repressor NanR of Klebsiella aerogenes (strain ATCC 13048 / DSM 30053 / CCUG 1429 / JCM 1235 / KCTC 2190 / NBRC 13534 / NCIMB 10102 / NCTC 10006 / CDC 819-56) (Enterobacter aerogenes).